The following is a 229-amino-acid chain: Flagellar L-ring protein (229 aa).

Positions 1-23 (MNPLTRVALAVAAFAALVLALSA) are cleaved as a signal peptide. A lipid anchor (N-palmitoyl cysteine) is attached at C24. The S-diacylglycerol cysteine moiety is linked to residue C24.

It belongs to the FlgH family. In terms of assembly, the basal body constitutes a major portion of the flagellar organelle and consists of four rings (L,P,S, and M) mounted on a central rod.

The protein localises to the cell outer membrane. Its subcellular location is the bacterial flagellum basal body. Assembles around the rod to form the L-ring and probably protects the motor/basal body from shearing forces during rotation. The chain is Flagellar L-ring protein from Anaeromyxobacter dehalogenans (strain 2CP-1 / ATCC BAA-258).